The chain runs to 450 residues: Glutamyl-tRNA(Gln) amidotransferase subunit A, mitochondrial (450 aa).

Residues K47 and S122 each act as charge relay system in the active site. S146 serves as the catalytic Acyl-ester intermediate.

The protein belongs to the amidase family. GatA subfamily. As to quaternary structure, subunit of the heterotrimeric GatFAB amidotransferase (AdT) complex, composed of A, B and F subunits.

The protein resides in the mitochondrion. It carries out the reaction L-glutamyl-tRNA(Gln) + L-glutamine + ATP + H2O = L-glutaminyl-tRNA(Gln) + L-glutamate + ADP + phosphate + H(+). Its function is as follows. Allows the formation of correctly charged Gln-tRNA(Gln) through the transamidation of misacylated Glu-tRNA(Gln) in the mitochondria. The reaction takes place in the presence of glutamine and ATP through an activated gamma-phospho-Glu-tRNA(Gln). The chain is Glutamyl-tRNA(Gln) amidotransferase subunit A, mitochondrial from Candida albicans (strain SC5314 / ATCC MYA-2876) (Yeast).